Consider the following 441-residue polypeptide: Proline--tRNA ligase (441 aa).

The protein belongs to the class-II aminoacyl-tRNA synthetase family. ProS type 2 subfamily. Homodimer.

It localises to the cytoplasm. It carries out the reaction tRNA(Pro) + L-proline + ATP = L-prolyl-tRNA(Pro) + AMP + diphosphate. Functionally, catalyzes the attachment of proline to tRNA(Pro) in a two-step reaction: proline is first activated by ATP to form Pro-AMP and then transferred to the acceptor end of tRNA(Pro). This is Proline--tRNA ligase from Methylorubrum extorquens (strain PA1) (Methylobacterium extorquens).